A 187-amino-acid polypeptide reads, in one-letter code: 1,6-anhydro-N-acetylmuramyl-L-alanine amidase AmpD (187 aa).

The N-acetylmuramoyl-L-alanine amidase domain maps to 30-167 (LLVVHNISLP…APERKTDPGP (138 aa)). Histidine 34 is a binding site for Zn(2+). The Proton acceptor role is filled by glutamate 116. Residues histidine 154 and aspartate 164 each coordinate Zn(2+).

Belongs to the N-acetylmuramoyl-L-alanine amidase 2 family. Zn(2+) is required as a cofactor.

The protein resides in the cytoplasm. The catalysed reaction is Hydrolyzes the link between N-acetylmuramoyl residues and L-amino acid residues in certain cell-wall glycopeptides.. Its activity is regulated as follows. Amidase activity is inhibited by metal chelators such as EDTA, dipicolinic acid or 1,10-phenanthroline. Involved in cell wall peptidoglycan recycling. Specifically cleaves the amide bond between the lactyl group of N-acetylmuramic acid and the alpha-amino group of the L-alanine in degradation products containing an anhydro N-acetylmuramyl moiety. Is also involved in beta-lactamase induction. This Citrobacter freundii protein is 1,6-anhydro-N-acetylmuramyl-L-alanine amidase AmpD.